Consider the following 471-residue polypeptide: MASKTFDAGVQDYQLTYWTPDYTPLDTDLLACFKVVPQDGVPREEAAAAVAAESSTGTWTTVWTDLLTDMEFYKGRCYRIEDVPGDKNAFYAFIAYPLDLFEEGSVVNVLTSLVGNVFGFKAVRSLRLEDLRFPIAFIKTCGGPPAGIQVERDKLNKYGRPMLGCTIKPKLGLSAKNYGRAVYECLRGGLDLTKDDENINSQPFQRWQNRFEFVADAVDKATAETGERKGHYLNVTAGTVEEMMKRAEFAKELGQPIIMHDFLTAGFTANTTLANWCRDNGMLLHIHRAMHAVIDRNPNHGIHFRVLAKCLRLSGGDHLHTGTVVGKLEGDRASTLGFVDQLREAFVPEDRSRGVFFDQDWGSMPGVMAVASGGIHVWHMPALVNIFGDDSVLQFGGGTQGHPGGNAAGAAANRVALEACVKARNEGRDLEREGGDILRDAARNSKELAVALDTWKEIKFEFDTVDKLDVG.

2 residues coordinate substrate: N116 and T166. The active-site Proton acceptor is the K168. Position 170 (K170) interacts with substrate. Residues K194, D196, and E197 each contribute to the Mg(2+) site. K194 carries the post-translational modification N6-carboxylysine. H287 functions as the Proton acceptor in the catalytic mechanism. R288, H320, and S372 together coordinate substrate.

The protein belongs to the RuBisCO large chain family. Type I subfamily. Heterohexadecamer of 8 large chains and 8 small chains. Forms a CsoS2-CsoS1-RuBisCO complex. Mg(2+) is required as a cofactor.

It localises to the carboxysome. The catalysed reaction is 2 (2R)-3-phosphoglycerate + 2 H(+) = D-ribulose 1,5-bisphosphate + CO2 + H2O. The enzyme catalyses D-ribulose 1,5-bisphosphate + O2 = 2-phosphoglycolate + (2R)-3-phosphoglycerate + 2 H(+). Its function is as follows. RuBisCO catalyzes two reactions: the carboxylation of D-ribulose 1,5-bisphosphate, the primary event in carbon dioxide fixation, as well as the oxidative fragmentation of the pentose substrate. Both reactions occur simultaneously and in competition at the same active site. Replacing the endogenous type I ccbLS genes in H.neapolitanus with this carboxysomally targeted enzyme reconstitutes RuBisCO with about 25% of normal activity; the active enzyme is targeted to carboxysomes. The sequence is that of Ribulose bisphosphate carboxylase large chain 2 from Hydrogenovibrio crunogenus (strain DSM 25203 / XCL-2) (Thiomicrospira crunogena).